The sequence spans 488 residues: 3-octaprenyl-4-hydroxybenzoate carboxy-lyase (488 aa).

Residue Asn172 coordinates Mn(2+). Residues 175-177 (IYR), 189-191 (RWL), and 194-195 (RG) contribute to the prenylated FMN site. Position 238 (Glu238) interacts with Mn(2+). The active-site Proton donor is Asp287.

The protein belongs to the UbiD family. Homohexamer. The cofactor is prenylated FMN. Requires Mn(2+) as cofactor.

The protein localises to the cell membrane. It catalyses the reaction a 4-hydroxy-3-(all-trans-polyprenyl)benzoate + H(+) = a 2-(all-trans-polyprenyl)phenol + CO2. Its pathway is cofactor biosynthesis; ubiquinone biosynthesis. Catalyzes the decarboxylation of 3-octaprenyl-4-hydroxy benzoate to 2-octaprenylphenol, an intermediate step in ubiquinone biosynthesis. This is 3-octaprenyl-4-hydroxybenzoate carboxy-lyase from Pseudomonas fluorescens (strain SBW25).